The primary structure comprises 788 residues: Integrin beta-6 (788 aa).

A signal peptide spans 1–21; sequence MGIELLCFFFLFLGRDDHVRG. A PSI domain is found at 22–71; it reads GCAMEGAETCGDCLLIGPQCAWCSQENFTHPSGVSERCDTPANLLAKGCQ. Residues 22–709 lie on the Extracellular side of the membrane; it reads GCAMEGAETC…KDCPKPPNIP (688 aa). Cystine bridges form between Cys23–Cys41, Cys31–Cys454, Cys34–Cys59, Cys44–Cys70, Cys197–Cys204, Cys252–Cys293, Cys394–Cys406, Cys426–Cys452, Cys456–Cys476, Cys467–Cys479, Cys481–Cys490, Cys492–Cys519, Cys502–Cys517, Cys511–Cys522, Cys524–Cys537, Cys539–Cys560, Cys544–Cys558, Cys552–Cys563, and Cys565–Cys574. N-linked (GlcNAc...) asparagine glycans are attached at residues Asn48 and Asn97. The 241-residue stretch at 131-371 folds into the VWFA domain; sequence YPVDLYYLMD…QLIISAYEEL (241 aa). Residues Asp140, Ser142, and Ser144 each contribute to the Mg(2+) site. Residues Ser144, Asp147, Asp148, and Glu179 each contribute to the Ca(2+) site. Residues Asn235, Asp237, Pro239, and Glu240 each contribute to the Ca(2+) site. Residue Glu240 coordinates Mg(2+). Asn260 is a glycosylation site (N-linked (GlcNAc...) asparagine). Ca(2+) is bound by residues Asp271 and Lys355. 3 N-linked (GlcNAc...) asparagine glycosylation sites follow: Asn387, Asn396, and Asn418. I-EGF domains lie at 456–491, 492–538, 539–575, and 576–615; these read CQKE…PHCE, CGED…PYCQ, CDNF…EYCN, and CTTS…PTCE. N-linked (GlcNAc...) asparagine glycosylation is found at Asn463 and Asn471. Asn541 carries N-linked (GlcNAc...) asparagine glycosylation. Asn575 is a glycosylation site (N-linked (GlcNAc...) asparagine). 9 cysteine pairs are disulfide-bonded: Cys576–Cys599, Cys583–Cys597, Cys591–Cys602, Cys604–Cys614, Cys617–Cys620, Cys624–Cys670, Cys630–Cys649, Cys633–Cys645, and Cys678–Cys702. Asn696 carries an N-linked (GlcNAc...) asparagine glycan. A helical transmembrane segment spans residues 710–730; sequence MIMLGVSLAILLIGVVLLCIW. The tract at residues 731–758 is interaction with HAX1; sequence KLLVSFHDRKEVAKFEAERSKAKWQTGT. At 731–788 the chain is on the cytoplasmic side; that stretch reads KLLVSFHDRKEVAKFEAERSKAKWQTGTNPLYRGSTSTFKNVTYKHRDKLKTDLSTDG.

This sequence belongs to the integrin beta chain family. In terms of assembly, heterodimer of an alpha and a beta subunit. Interacts with FLNB. Interacts with HAX1. ITGAV:ITGB6 interacts with FBN1. ITGAV:ITGB6 interacts with TGFB1.

It is found in the cell membrane. The protein localises to the cell junction. Its subcellular location is the focal adhesion. In terms of biological role, integrin alpha-V:beta-6 (ITGAV:ITGB6) is a receptor for fibronectin and cytotactin. It recognizes the sequence R-G-D in its ligands. ITGAV:ITGB6 acts as a receptor for fibrillin-1 (FBN1) and mediates R-G-D-dependent cell adhesion to FBN1. Integrin alpha-V:beta-6 (ITGAV:ITGB6) mediates R-G-D-dependent release of transforming growth factor beta-1 (TGF-beta-1) from regulatory Latency-associated peptide (LAP), thereby playing a key role in TGF-beta-1 activation. In Cavia porcellus (Guinea pig), this protein is Integrin beta-6 (ITGB6).